The primary structure comprises 199 residues: Peptidyl-tRNA hydrolase (199 aa).

Tyrosine 15 provides a ligand contact to tRNA. The Proton acceptor role is filled by histidine 20. TRNA is bound by residues tyrosine 66, asparagine 68, and asparagine 114.

The protein belongs to the PTH family. Monomer.

It localises to the cytoplasm. It carries out the reaction an N-acyl-L-alpha-aminoacyl-tRNA + H2O = an N-acyl-L-amino acid + a tRNA + H(+). Its function is as follows. Hydrolyzes ribosome-free peptidyl-tRNAs (with 1 or more amino acids incorporated), which drop off the ribosome during protein synthesis, or as a result of ribosome stalling. Functionally, catalyzes the release of premature peptidyl moieties from peptidyl-tRNA molecules trapped in stalled 50S ribosomal subunits, and thus maintains levels of free tRNAs and 50S ribosomes. This chain is Peptidyl-tRNA hydrolase, found in Burkholderia multivorans (strain ATCC 17616 / 249).